The sequence spans 551 residues: Chaperonin GroEL (551 aa).

ATP is bound by residues 30–33 (TLGP), Lys51, 87–91 (DGTTT), Gly415, 479–481 (NAA), and Asp495. The disordered stretch occupies residues 523 to 551 (DSPKEDKSSDMPSPSAGGMGGMGGMGGMM). The span at 539–551 (GGMGGMGGMGGMM) shows a compositional bias: gly residues.

It belongs to the chaperonin (HSP60) family. Forms a cylinder of 14 subunits composed of two heptameric rings stacked back-to-back. Interacts with the co-chaperonin GroES.

The protein localises to the cytoplasm. The enzyme catalyses ATP + H2O + a folded polypeptide = ADP + phosphate + an unfolded polypeptide.. Functionally, together with its co-chaperonin GroES, plays an essential role in assisting protein folding. The GroEL-GroES system forms a nano-cage that allows encapsulation of the non-native substrate proteins and provides a physical environment optimized to promote and accelerate protein folding. The protein is Chaperonin GroEL of Buchnera aphidicola subsp. Chaetophorus leucomelas.